The primary structure comprises 210 residues: Protein GrpE (210 aa).

This sequence belongs to the GrpE family. In terms of assembly, homodimer.

The protein localises to the cytoplasm. In terms of biological role, participates actively in the response to hyperosmotic and heat shock by preventing the aggregation of stress-denatured proteins, in association with DnaK and GrpE. It is the nucleotide exchange factor for DnaK and may function as a thermosensor. Unfolded proteins bind initially to DnaJ; upon interaction with the DnaJ-bound protein, DnaK hydrolyzes its bound ATP, resulting in the formation of a stable complex. GrpE releases ADP from DnaK; ATP binding to DnaK triggers the release of the substrate protein, thus completing the reaction cycle. Several rounds of ATP-dependent interactions between DnaJ, DnaK and GrpE are required for fully efficient folding. This chain is Protein GrpE, found in Rhizobium leguminosarum bv. trifolii (strain WSM2304).